Here is a 453-residue protein sequence, read N- to C-terminus: Ribosomal protein uS12 methylthiotransferase RimO (453 aa).

Residues 4–120 form the MTTase N-terminal domain; the sequence is TSVHIVSLGC…IADHLRVLME (117 aa). Cys13, Cys49, Cys83, Cys161, Cys165, and Cys168 together coordinate [4Fe-4S] cluster. Positions 147-377 constitute a Radical SAM core domain; it reads STPPYSAYLK…MEEQAVISHE (231 aa). The region spanning 380–450 is the TRAM domain; the sequence is QTLVGSLQEV…DYDLFAEVIS (71 aa).

The protein belongs to the methylthiotransferase family. RimO subfamily. It depends on [4Fe-4S] cluster as a cofactor.

The protein localises to the cytoplasm. It carries out the reaction L-aspartate(89)-[ribosomal protein uS12]-hydrogen + (sulfur carrier)-SH + AH2 + 2 S-adenosyl-L-methionine = 3-methylsulfanyl-L-aspartate(89)-[ribosomal protein uS12]-hydrogen + (sulfur carrier)-H + 5'-deoxyadenosine + L-methionine + A + S-adenosyl-L-homocysteine + 2 H(+). Functionally, catalyzes the methylthiolation of an aspartic acid residue of ribosomal protein uS12. This chain is Ribosomal protein uS12 methylthiotransferase RimO, found in Syntrophus aciditrophicus (strain SB).